Consider the following 1623-residue polypeptide: RING finger protein 17 (1623 aa).

Residues 1 to 22 (MAAEASKTGPSRSSYQRMGRKS) form a disordered region. The RING-type zinc-finger motif lies at 32–75 (CTRCGRRVSRSSGHHCELQCGHAFCELCLLMTEECTTIICPDCE). K234 carries the post-translational modification N6-acetyllysine. 3 consecutive Tudor domains span residues 726-784 (CPVQ…FLNA), 962-1021 (KWEN…LKTM), and 1228-1285 (FWKK…PDIP). Residues 1438-1462 (NQSNQHSDTDDSGVSGESESESLDE) form a disordered region. In terms of domain architecture, Tudor 4 spans 1479 to 1539 (DFRTEMPCLA…CQIPSHLMRY (61 aa)).

In terms of assembly, interacts with MXD1, MXD3, MXD4, MXI1 and PIWIL1. Self-associates. In terms of tissue distribution, testis specific.

It is found in the cytoplasm. It localises to the nucleus. Seems to be involved in regulation of transcriptional activity of MYC. In vitro, inhibits DNA-binding activity of Mad-MAX heterodimers. Can recruit Mad transcriptional repressors (MXD1, MXD3, MXD4 and MXI1) to the cytoplasm. May be involved in spermiogenesis. This is RING finger protein 17 (RNF17) from Homo sapiens (Human).